Consider the following 139-residue polypeptide: Translation initiation factor 2 subunit beta (139 aa).

It belongs to the eIF-2-beta/eIF-5 family. As to quaternary structure, heterotrimer composed of an alpha, a beta and a gamma chain.

Functionally, eIF-2 functions in the early steps of protein synthesis by forming a ternary complex with GTP and initiator tRNA. This chain is Translation initiation factor 2 subunit beta, found in Nanoarchaeum equitans (strain Kin4-M).